Consider the following 224-residue polypeptide: Imidazoleglycerol-phosphate dehydratase (224 aa).

This sequence belongs to the imidazoleglycerol-phosphate dehydratase family.

It carries out the reaction D-erythro-1-(imidazol-4-yl)glycerol 3-phosphate = 3-(imidazol-4-yl)-2-oxopropyl phosphate + H2O. It participates in amino-acid biosynthesis; L-histidine biosynthesis; L-histidine from 5-phospho-alpha-D-ribose 1-diphosphate: step 6/9. This Komagataella pastoris (Yeast) protein is Imidazoleglycerol-phosphate dehydratase (HIS3).